The following is a 420-amino-acid chain: Serine protease inhibitor A3B (420 aa).

Residues 1 to 17 (MAFIAALGLLMAEICPA) form the signal peptide. Residues N104 and N349 are each glycosylated (N-linked (GlcNAc...) asparagine). The segment at 367-392 (GTEGDAITIVGYNFMSAKLKPVFVKF) is RCL.

It belongs to the serpin family.

It is found in the secreted. This is Serine protease inhibitor A3B (Serpina3b) from Mus musculus (Mouse).